The primary structure comprises 510 residues: Polyamine aminopropyltransferase 2 (510 aa).

6 consecutive transmembrane segments (helical) span residues 6–26, 38–58, 74–94, 102–122, 140–160, and 165–185; these read ALLV…ELIA, ILQF…GSWV, LELL…LLFA, LVLY…IPLV, VLTF…LVLA, and LVRT…WTLW. In terms of domain architecture, PABS spans 205-449; the sequence is AGMVGAALLA…GEWGFILAAP (245 aa). Residues 207–456 are spermidine synthase; the sequence is MVGAALLAGF…AAPGRADFRP (250 aa). Glutamine 244 contacts S-methyl-5'-thioadenosine. Positions 274 and 298 each coordinate spermidine. Residues aspartate 318 and 352–353 each bind S-methyl-5'-thioadenosine; that span reads DA. Catalysis depends on aspartate 370, which acts as the Proton acceptor.

This sequence belongs to the spermidine/spermine synthase family. Homodimer or homotetramer.

It localises to the cell membrane. It carries out the reaction S-adenosyl 3-(methylsulfanyl)propylamine + putrescine = S-methyl-5'-thioadenosine + spermidine + H(+). Its pathway is amine and polyamine biosynthesis; spermidine biosynthesis; spermidine from putrescine: step 1/1. Its function is as follows. Catalyzes the irreversible transfer of a propylamine group from the amino donor S-adenosylmethioninamine (decarboxy-AdoMet) to putrescine (1,4-diaminobutane) to yield spermidine. The polypeptide is Polyamine aminopropyltransferase 2 (Ralstonia nicotianae (strain ATCC BAA-1114 / GMI1000) (Ralstonia solanacearum)).